The sequence spans 378 residues: MSATLELARELIQRPSVTPEDAGCQTLVAERLAAAGFGAEWLNAAGVTNLWAQRGTERPLFCFLGHTDVVPSGPESAWQHPPFQPIVENGCLYGRGAADMKGSVAAFVAAVERFVARHPDHAGAIAVLLTSDEEGPAVDGTRRVVETLAARGAAIDYCLVGEPSSQARLGDEYKVGRRGSLTGHLTVHGEQGHVAYPHQADNPIHAFAPALQELVATEWDQGDADFPPTSFQISNIQAGTGADNVIPGAMEVVFNLRYAPAVSAEELQERIESILHRHGVHHTLHWRHSGAPFATREGALIDAVEQAVTAHTGQCPRRSTSGGTSDGRFMGPTGAQVVELGPLNATIHKANEHVAVADLEALEAIYFDILQHLLAPAD.

Histidine 66 contributes to the Zn(2+) binding site. The active site involves aspartate 68. Aspartate 99 is a binding site for Zn(2+). Glutamate 133 (proton acceptor) is an active-site residue. Zn(2+) contacts are provided by glutamate 134, glutamate 162, and histidine 348.

The protein belongs to the peptidase M20A family. DapE subfamily. In terms of assembly, homodimer. The cofactor is Zn(2+). Requires Co(2+) as cofactor.

It catalyses the reaction N-succinyl-(2S,6S)-2,6-diaminopimelate + H2O = (2S,6S)-2,6-diaminopimelate + succinate. The protein operates within amino-acid biosynthesis; L-lysine biosynthesis via DAP pathway; LL-2,6-diaminopimelate from (S)-tetrahydrodipicolinate (succinylase route): step 3/3. Its function is as follows. Catalyzes the hydrolysis of N-succinyl-L,L-diaminopimelic acid (SDAP), forming succinate and LL-2,6-diaminopimelate (DAP), an intermediate involved in the bacterial biosynthesis of lysine and meso-diaminopimelic acid, an essential component of bacterial cell walls. The chain is Succinyl-diaminopimelate desuccinylase from Halorhodospira halophila (strain DSM 244 / SL1) (Ectothiorhodospira halophila (strain DSM 244 / SL1)).